We begin with the raw amino-acid sequence, 283 residues long: DegV domain-containing protein CPE0304 (283 aa).

One can recognise a DegV domain in the interval 3 to 281 (VKVITDSTSC…VKSVGIAYAR (279 aa)). Residues S60 and S92 each coordinate hexadecanoate.

May bind long-chain fatty acids, such as palmitate, and may play a role in lipid transport or fatty acid metabolism. The polypeptide is DegV domain-containing protein CPE0304 (Clostridium perfringens (strain 13 / Type A)).